We begin with the raw amino-acid sequence, 506 residues long: Hippocampus abundant transcript-like protein 1 (506 aa).

Residues 1-25 form a disordered region; that stretch reads MSVEPPPELEEKAASEPEAGAMPEK. Residues 1 to 49 are Extracellular-facing; sequence MSVEPPPELEEKAASEPEAGAMPEKRAGAQAAGSTWLQGFGRPSVYHAA. The helical transmembrane segment at 50–70 threads the bilayer; sequence IVIFLEFFAWGLLTTPMLTVL. At 71-82 the chain is on the cytoplasmic side; that stretch reads HETFSQHTFLMN. A helical membrane pass occupies residues 83 to 103; the sequence is GLIQGVKGLLSFLSAPLIGAL. At 104–111 the chain is on the extracellular side; sequence SDVWGRKP. A helical membrane pass occupies residues 112–132; the sequence is FLLGTVFFTCFPIPLMRISPW. Residues 133-134 lie on the Cytoplasmic side of the membrane; the sequence is WY. A helical transmembrane segment spans residues 135–155; sequence FAMISVSGVFSVTFSVIFAYV. Residues 156–168 lie on the Extracellular side of the membrane; that stretch reads ADVTQEHERSTAY. The chain crosses the membrane as a helical span at residues 169-189; that stretch reads GWVSATFAASLVSSPAIGAYL. Over 190–196 the chain is Cytoplasmic; it reads SASYGDS. The chain crosses the membrane as a helical span at residues 197 to 217; the sequence is LVVLVATVVALLDICFILVAV. The Extracellular segment spans residues 218-255; the sequence is PESLPEKMRPVSWGAQISWKQADPFASLKKVGKDSTVL. A helical transmembrane segment spans residues 256–276; it reads LICITVFLSYLPEAGQYSSFF. Topologically, residues 277 to 281 are cytoplasmic; that stretch reads LYLRQ. The chain crosses the membrane as a helical span at residues 282–302; sequence VIGFGSVKIAAFIAMVGILSI. The Extracellular segment spans residues 303–319; that stretch reads VAQTAFLSILMRSLGNK. A helical transmembrane segment spans residues 320–340; it reads NTVLLGLGFQMLQLAWYGFGS. Gln-341 is a topological domain (cytoplasmic). A helical membrane pass occupies residues 342–362; sequence AWMMWAAGTVAAMSSITFPAI. Residues 363 to 387 are Extracellular-facing; that stretch reads SALVSRNAESDQQGVAQGIITGIRG. A helical transmembrane segment spans residues 388 to 408; it reads LCNGLGPALYGFIFYMFHVEL. Topologically, residues 409–428 are cytoplasmic; the sequence is TELGPKLNSNNVPLQGAVIP. The helical transmembrane segment at 429–449 threads the bilayer; it reads GPPFLFGACIVLMSFLVALFI. The Extracellular portion of the chain corresponds to 450–506; sequence PEYSKASGVQKHSNSSSGSLTNTPERGSDEDIEPLLQDSSIWELSSFEEPGNQCTEL. The tract at residues 457 to 481 is disordered; that stretch reads GVQKHSNSSSGSLTNTPERGSDEDI. Positions 459 to 474 are enriched in polar residues; the sequence is QKHSNSSSGSLTNTPE. Asn-463 carries N-linked (GlcNAc...) asparagine glycosylation.

The protein belongs to the major facilitator superfamily.

Its subcellular location is the membrane. The chain is Hippocampus abundant transcript-like protein 1 from Homo sapiens (Human).